Reading from the N-terminus, the 236-residue chain is Ureidoacrylate amidohydrolase RutB (236 aa).

Residue Asp24 is the Proton acceptor of the active site. Lys133 is a catalytic residue. Cys166 serves as the catalytic Nucleophile.

This sequence belongs to the isochorismatase family. RutB subfamily.

It catalyses the reaction (Z)-3-ureidoacrylate + H2O + H(+) = (Z)-3-aminoacrylate + NH4(+) + CO2. It carries out the reaction (Z)-3-ureidoacrylate + H2O = (Z)-3-aminoacrylate + carbamate + H(+). The catalysed reaction is (Z)-2-methylureidoacrylate + H2O + H(+) = (Z)-2-methylaminoacrylate + NH4(+) + CO2. Functionally, hydrolyzes ureidoacrylate to form aminoacrylate and carbamate. The carbamate hydrolyzes spontaneously, thereby releasing one of the nitrogen atoms of the pyrimidine ring as ammonia and one of its carbon atoms as CO2. The protein is Ureidoacrylate amidohydrolase RutB of Klebsiella pneumoniae subsp. pneumoniae (strain ATCC 700721 / MGH 78578).